We begin with the raw amino-acid sequence, 220 residues long: Large ribosomal subunit protein uL3 (220 aa).

The segment at 130–156 (AIKRHGQSRGPMSHGSHFHRAPGSVGM) is disordered.

This sequence belongs to the universal ribosomal protein uL3 family. As to quaternary structure, part of the 50S ribosomal subunit. Forms a cluster with proteins L14 and L19.

Functionally, one of the primary rRNA binding proteins, it binds directly near the 3'-end of the 23S rRNA, where it nucleates assembly of the 50S subunit. The polypeptide is Large ribosomal subunit protein uL3 (Staphylococcus aureus (strain Mu3 / ATCC 700698)).